The chain runs to 255 residues: Triosephosphate isomerase (255 aa).

Substrate is bound at residue 9-11 (NWK). The active-site Electrophile is H95. E167 acts as the Proton acceptor in catalysis. Substrate contacts are provided by residues G173, S212, and 233-234 (GG).

It belongs to the triosephosphate isomerase family. In terms of assembly, homodimer.

The protein localises to the cytoplasm. The catalysed reaction is D-glyceraldehyde 3-phosphate = dihydroxyacetone phosphate. Its pathway is carbohydrate biosynthesis; gluconeogenesis. It participates in carbohydrate degradation; glycolysis; D-glyceraldehyde 3-phosphate from glycerone phosphate: step 1/1. Its function is as follows. Involved in the gluconeogenesis. Catalyzes stereospecifically the conversion of dihydroxyacetone phosphate (DHAP) to D-glyceraldehyde-3-phosphate (G3P). This is Triosephosphate isomerase from Serratia proteamaculans (strain 568).